A 209-amino-acid chain; its full sequence is Uridine kinase (209 aa).

12-19 (GGSGSGKT) serves as a coordination point for ATP.

This sequence belongs to the uridine kinase family.

The protein localises to the cytoplasm. It carries out the reaction uridine + ATP = UMP + ADP + H(+). The enzyme catalyses cytidine + ATP = CMP + ADP + H(+). It functions in the pathway pyrimidine metabolism; CTP biosynthesis via salvage pathway; CTP from cytidine: step 1/3. It participates in pyrimidine metabolism; UMP biosynthesis via salvage pathway; UMP from uridine: step 1/1. The protein is Uridine kinase of Listeria innocua serovar 6a (strain ATCC BAA-680 / CLIP 11262).